We begin with the raw amino-acid sequence, 245 residues long: 1-(5-phosphoribosyl)-5-[(5-phosphoribosylamino)methylideneamino] imidazole-4-carboxamide isomerase (245 aa).

Catalysis depends on aspartate 8, which acts as the Proton acceptor. Aspartate 129 serves as the catalytic Proton donor.

Belongs to the HisA/HisF family.

It is found in the cytoplasm. It carries out the reaction 1-(5-phospho-beta-D-ribosyl)-5-[(5-phospho-beta-D-ribosylamino)methylideneamino]imidazole-4-carboxamide = 5-[(5-phospho-1-deoxy-D-ribulos-1-ylimino)methylamino]-1-(5-phospho-beta-D-ribosyl)imidazole-4-carboxamide. It participates in amino-acid biosynthesis; L-histidine biosynthesis; L-histidine from 5-phospho-alpha-D-ribose 1-diphosphate: step 4/9. This is 1-(5-phosphoribosyl)-5-[(5-phosphoribosylamino)methylideneamino] imidazole-4-carboxamide isomerase from Pelobacter propionicus (strain DSM 2379 / NBRC 103807 / OttBd1).